The sequence spans 681 residues: Heat shock 70 kDa protein (681 aa).

Residues 655–665 are compositionally biased toward gly residues; that stretch reads NFPGGMPGAGM. Residues 655–681 form a disordered region; sequence NFPGGMPGAGMPGNAPAGSGPTVEEVD. The span at 666-675 shows a compositional bias: low complexity; that stretch reads PGNAPAGSGP.

The protein belongs to the heat shock protein 70 family.

This chain is Heat shock 70 kDa protein, found in Plasmodium falciparum.